The sequence spans 179 residues: Bifunctional protein PyrR (179 aa).

A PRPP-binding motif is present at residues V100–T112.

It belongs to the purine/pyrimidine phosphoribosyltransferase family. PyrR subfamily. As to quaternary structure, homodimer and homohexamer; in equilibrium.

The catalysed reaction is UMP + diphosphate = 5-phospho-alpha-D-ribose 1-diphosphate + uracil. In terms of biological role, regulates transcriptional attenuation of the pyrimidine nucleotide (pyr) operon by binding in a uridine-dependent manner to specific sites on pyr mRNA. This disrupts an antiterminator hairpin in the RNA and favors formation of a downstream transcription terminator, leading to a reduced expression of downstream genes. Also displays a weak uracil phosphoribosyltransferase activity which is not physiologically significant. The polypeptide is Bifunctional protein PyrR (Geobacillus thermodenitrificans (strain NG80-2)).